A 118-amino-acid polypeptide reads, in one-letter code: MIIGHGIDLQEISAVEKAYKRQPRFAQKVLTQKEFDIFEAYKGKRQISYLAGRWSAKEAFAKAMGTGIGNLSFQDIEVLSDEKGKPFINRSPFTGKAWISISHSGDFVQSSVILEEEK.

The Mg(2+) site is built by aspartate 8 and glutamate 58.

This sequence belongs to the P-Pant transferase superfamily. AcpS family. Requires Mg(2+) as cofactor.

It is found in the cytoplasm. The enzyme catalyses apo-[ACP] + CoA = holo-[ACP] + adenosine 3',5'-bisphosphate + H(+). In terms of biological role, transfers the 4'-phosphopantetheine moiety from coenzyme A to a Ser of acyl-carrier-protein. The chain is Holo-[acyl-carrier-protein] synthase from Streptococcus uberis (strain ATCC BAA-854 / 0140J).